The primary structure comprises 455 residues: MSHGASSRPATARKSSGLSGTVRIPGDKSISHRSFMFGGLASGETRITGLLEGEDVINTGKAMQAMGARIRKEGDTWIIDGVGNGGLLAPEAPLDFGNAATGCRLTMGLVGVYDFDSTFIGDASLTKRPMGRVLNPLREMGVQVKSEDGDRLPVTLRGPKTPTPITYRVPMASAQVKSAVLLAGLNTPGITTVIEPIMTRDHTEKMLQGFGANLTVETDADGVRTIRLEGRGKLTGQVIDVPGDPSSTAFPLVAALLVPGSDVTILNVLMNPTRTGLILTLQEMGADIEVINPRLAGGEDVADLRVRSSTLKGVTVPEDRAPSMIDEYPILAVAAAFAEGATVMNGLEELRVKESDRLSAVANGLKLNGVDCDEGETSLVVRGRPDGKGLGNASGAAVATHLDHRIAMSFLVMGLVSENPVTVDDATMIATSFPEFMDLMAGLGAKIELSDTKAA.

Positions 1-19 are enriched in polar residues; it reads MSHGASSRPATARKSSGLS. The tract at residues 1-25 is disordered; that stretch reads MSHGASSRPATARKSSGLSGTVRIP. A phosphoenolpyruvate-binding site is contributed by lysine 28. The 3-phosphoshikimate site is built by serine 29 and arginine 33. Arginine 128 is a phosphoenolpyruvate binding site. Residues serine 173, alanine 174, glutamine 175, aspartate 326, and lysine 353 each contribute to the 3-phosphoshikimate site. Glutamine 175 is a phosphoenolpyruvate binding site. Aspartate 326 (proton acceptor) is an active-site residue. Residues arginine 357 and arginine 405 each coordinate phosphoenolpyruvate.

Belongs to the EPSP synthase family. As to quaternary structure, monomer.

Its subcellular location is the cytoplasm. It catalyses the reaction 3-phosphoshikimate + phosphoenolpyruvate = 5-O-(1-carboxyvinyl)-3-phosphoshikimate + phosphate. The protein operates within metabolic intermediate biosynthesis; chorismate biosynthesis; chorismate from D-erythrose 4-phosphate and phosphoenolpyruvate: step 6/7. Its activity is regulated as follows. Is resistant to inhibition by glyphosate (glyphosate-tolerant) like other members of class II EPSPS, in contrast to class I EPSPS, which is glyphosate-sensitive. Is much less sensitive to inhibition by the (R)-difluoromethyl and (R)-phosphonate analogs of the tetrahedral reaction intermediate than the representative class I EPSPS from E.coli. Is highly activated in the presence of cations, such as NH4(+), Rb(+), and K(+). Functionally, catalyzes the transfer of the enolpyruvyl moiety of phosphoenolpyruvate (PEP) to the 5-hydroxyl of shikimate-3-phosphate (S3P) to produce enolpyruvyl shikimate-3-phosphate and inorganic phosphate. This is 3-phosphoshikimate 1-carboxyvinyltransferase from Agrobacterium sp. (strain CP4).